The primary structure comprises 131 residues: Large ribosomal subunit protein bL12 (131 aa).

This sequence belongs to the bacterial ribosomal protein bL12 family. As to quaternary structure, homodimer. Part of the ribosomal stalk of the 50S ribosomal subunit. Forms a multimeric L10(L12)X complex, where L10 forms an elongated spine to which 2 to 4 L12 dimers bind in a sequential fashion. Binds GTP-bound translation factors.

Forms part of the ribosomal stalk which helps the ribosome interact with GTP-bound translation factors. Is thus essential for accurate translation. The sequence is that of Large ribosomal subunit protein bL12 from Prochlorococcus marinus (strain MIT 9313).